The primary structure comprises 488 residues: Malonate-semialdehyde dehydrogenase 2 (488 aa).

Residues phenylalanine 155, lysine 179, glutamate 182, arginine 183, and serine 232 each coordinate NAD(+). The active-site Nucleophile is the cysteine 287. Glutamate 387 is a binding site for NAD(+).

Belongs to the aldehyde dehydrogenase family. IolA subfamily. Homotetramer.

It carries out the reaction 3-oxopropanoate + NAD(+) + CoA + H2O = hydrogencarbonate + acetyl-CoA + NADH + H(+). It catalyses the reaction 2-methyl-3-oxopropanoate + NAD(+) + CoA + H2O = propanoyl-CoA + hydrogencarbonate + NADH + H(+). It participates in polyol metabolism; myo-inositol degradation into acetyl-CoA; acetyl-CoA from myo-inositol: step 7/7. Its function is as follows. Catalyzes the oxidation of malonate semialdehyde (MSA) and methylmalonate semialdehyde (MMSA) into acetyl-CoA and propanoyl-CoA, respectively. Is involved in a myo-inositol catabolic pathway. Bicarbonate, and not CO2, is the end-product of the enzymatic reaction. This chain is Malonate-semialdehyde dehydrogenase 2, found in Bacillus cereus (strain ZK / E33L).